Reading from the N-terminus, the 397-residue chain is Cystinosin (397 aa).

A signal peptide spans 1 to 24 (MDFSTHRLTTLLLLLLATVALGNA). At 25–126 (QSSQLTVDSH…FVRVTVAKSR (102 aa)) the chain is on the lumenal side. Residues asparagine 43 and asparagine 86 are each glycosylated (N-linked (GlcNAc...) asparagine). The helical transmembrane segment at 127–147 (ALIYTSIIFGWVYFVAWSVSF) threads the bilayer. A PQ-loop 1 domain is found at 132–187 (SIIFGWVYFVAWSVSFYPQIWSNYRRKSVEGLNFDFLALNIVGFTLYSMFNCGLYF). Residues 148–167 (YPQIWSNYRRKSVEGLNFDF) are Cytoplasmic-facing. The chain crosses the membrane as a helical span at residues 168 to 188 (LALNIVGFTLYSMFNCGLYFI). Residues 189–210 (EDLQNEYEVRYPLGVNPVMLND) are Lumenal-facing. The chain crosses the membrane as a helical span at residues 211–231 (VVFSLHAMFATCITILQCFFY). Residues 232–239 (QRAQQRVS) lie on the Cytoplasmic side of the membrane. The chain crosses the membrane as a helical span at residues 240-260 (FIAYGILAIFAVVVVVSAGLA). Topologically, residues 261–263 (GGS) are lumenal. The helical transmembrane segment at 264–284 (VIHWLDFLYYCSYVKLTITII) threads the bilayer. Residues 271–327 (LYYCSYVKLTITIIKYVPQALMNYRRKSTSGWSIGNILLDFTGGTLSMLQMILNAHN) form the PQ-loop 2 domain. Residues 285–302 (KYVPQALMNYRRKSTSGW) lie on the Cytoplasmic side of the membrane. The chain crosses the membrane as a helical span at residues 303-323 (SIGNILLDFTGGTLSMLQMIL). Topologically, residues 324 to 340 (NAHNYDDWVSIFGDPTK) are lumenal. Residues 341–361 (FGLGLFSVLFDVFFMLQHYVF) form a helical membrane-spanning segment. At 362–397 (YRHSRESSSSDLTTVTDVQNRTNESPPPSEVTTEKY) the chain is on the cytoplasmic side. Positions 373–385 (LTTVTDVQNRTNE) are enriched in polar residues. A disordered region spans residues 373 to 397 (LTTVTDVQNRTNESPPPSEVTTEKY).

This sequence belongs to the cystinosin family.

It is found in the lysosome membrane. The enzyme catalyses L-cystine(out) + H(+)(out) = L-cystine(in) + H(+)(in). Functionally, cystine/H(+) symporter that mediates export of cystine, the oxidized dimer of cysteine, from lysosomes. Involved in cysteine homeostasis during periods of fasting, which indirectly regulates mTORC1-mediated signaling by supporting de novo CoA synthesis, the TCA cycle and amino acid metabolism during periods of food shortage. Important for maintaining autophagy, and for development and survival during periods of fasting. The polypeptide is Cystinosin (Drosophila melanogaster (Fruit fly)).